We begin with the raw amino-acid sequence, 691 residues long: Elongation factor G (691 aa).

A tr-type G domain is found at 8–282 (EKTRNIGIMA…AVVDYLPSPV (275 aa)). Residues 17–24 (AHIDAGKT), 81–85 (DTPGH), and 135–138 (NKMD) each bind GTP.

Belongs to the TRAFAC class translation factor GTPase superfamily. Classic translation factor GTPase family. EF-G/EF-2 subfamily.

The protein resides in the cytoplasm. Functionally, catalyzes the GTP-dependent ribosomal translocation step during translation elongation. During this step, the ribosome changes from the pre-translocational (PRE) to the post-translocational (POST) state as the newly formed A-site-bound peptidyl-tRNA and P-site-bound deacylated tRNA move to the P and E sites, respectively. Catalyzes the coordinated movement of the two tRNA molecules, the mRNA and conformational changes in the ribosome. This is Elongation factor G from Caldicellulosiruptor saccharolyticus (strain ATCC 43494 / DSM 8903 / Tp8T 6331).